Consider the following 284-residue polypeptide: Bifunctional protein FolD (284 aa).

Residues 164–166 (GRS) and Ser-189 each bind NADP(+).

The protein belongs to the tetrahydrofolate dehydrogenase/cyclohydrolase family. In terms of assembly, homodimer.

The enzyme catalyses (6R)-5,10-methylene-5,6,7,8-tetrahydrofolate + NADP(+) = (6R)-5,10-methenyltetrahydrofolate + NADPH. The catalysed reaction is (6R)-5,10-methenyltetrahydrofolate + H2O = (6R)-10-formyltetrahydrofolate + H(+). The protein operates within one-carbon metabolism; tetrahydrofolate interconversion. In terms of biological role, catalyzes the oxidation of 5,10-methylenetetrahydrofolate to 5,10-methenyltetrahydrofolate and then the hydrolysis of 5,10-methenyltetrahydrofolate to 10-formyltetrahydrofolate. This chain is Bifunctional protein FolD, found in Listeria innocua serovar 6a (strain ATCC BAA-680 / CLIP 11262).